The chain runs to 997 residues: FIP1[III]-like protein (997 aa).

Disordered regions lie at residues 250-272 (ITSNEASRSDVSHSYGSKDLNSV), 289-475 (AGSF…ETEG), 534-553 (SRSSFDLNQRNSRSSFKEED), and 880-900 (QGKVSNQSKKRFSNGGDTIEQ). The span at 261 to 272 (SHSYGSKDLNSV) shows a compositional bias: polar residues. Basic and acidic residues-rich tracts occupy residues 309–323 (TPSDKEMLEKEKEES), 334–346 (SVERESSLGDRIR), 367–379 (ESLKDSATDDQRE), and 388–404 (RLAEHEAISIKRGEDSG). A Nuclear localization signal motif is present at residues 397-404 (IKRGEDSG). A compositionally biased stretch (polar residues) spans 534-547 (SRSSFDLNQRNSRS). The stretch at 930–963 (EIIEEVKGVEIDNERIQESLKKMEKRRERFKGTK) forms a coiled coil.

It belongs to the FIP1 family. In terms of assembly, component of the cleavage and polyadenylation specificity factor (CPSF) complex. Forms a complex with cleavage and polyadenylation specificity factor (CPSF) subunits CLPS5, FIPS5, PAPS4, PCFS1, CSTF64 and CPSF30.

The protein localises to the nucleus. In terms of biological role, component of the cleavage and polyadenylation specificity factor (CPSF) complex that plays a key role in pre-mRNA 3'-end formation, recognizing the AAUAAA signal sequence and interacting with poly(A) polymerase and other factors to bring about cleavage and poly(A) addition. FIP1L1 contributes to poly(A) site recognition and stimulates poly(A) addition. Binds to U-rich RNA sequence elements surrounding the poly(A) site. May act to tether poly(A) polymerase to the CPSF complex. In Arabidopsis thaliana (Mouse-ear cress), this protein is FIP1[III]-like protein.